The following is a 69-amino-acid chain: Toxin Tma2 (69 aa).

The region spanning 2-66 (KDDYPVDTAE…SPTKTSKRCN (65 aa)) is the LCN-type CS-alpha/beta domain. 4 disulfide bridges follow: cysteine 14/cysteine 65, cysteine 18/cysteine 41, cysteine 27/cysteine 48, and cysteine 31/cysteine 50.

It belongs to the long (4 C-C) scorpion toxin superfamily. Sodium channel inhibitor family. As to expression, expressed by the venom gland.

The protein localises to the secreted. In terms of biological role, inhibits voltage-gated sodium channels (Nav). This toxin shows insect lethality against crickets. This Tityus macrochirus (Scorpion) protein is Toxin Tma2.